The chain runs to 1374 residues: DNA-directed RNA polymerase subunit beta (1374 aa).

This sequence belongs to the RNA polymerase beta chain family. The RNAP catalytic core consists of 2 alpha, 1 beta, 1 beta' and 1 omega subunit. When a sigma factor is associated with the core the holoenzyme is formed, which can initiate transcription.

The catalysed reaction is RNA(n) + a ribonucleoside 5'-triphosphate = RNA(n+1) + diphosphate. DNA-dependent RNA polymerase catalyzes the transcription of DNA into RNA using the four ribonucleoside triphosphates as substrates. This chain is DNA-directed RNA polymerase subunit beta, found in Rickettsia prowazekii (strain Madrid E).